The sequence spans 294 residues: Cyclin-G1 (294 aa).

This sequence belongs to the cyclin family. Cyclin G subfamily. As to quaternary structure, binds to B' regulatory B subunits of protein phosphatase A (PP2A) following induction by p53 (in vitro). Highest levels in kidney, heart and skeletal muscle.

The protein resides in the nucleus. Its function is as follows. May play a role in growth regulation. Is associated with G2/M phase arrest in response to DNA damage. May be an intermediate by which p53 mediates its role as an inhibitor of cellular proliferation. The chain is Cyclin-G1 (Ccng1) from Mus musculus (Mouse).